The chain runs to 425 residues: Serine--tRNA ligase (425 aa).

Disordered regions lie at residues 43–68 (QRSS…GSDP) and 108–131 (LPNL…RHCW). A compositionally biased stretch (basic and acidic residues) spans 117–131 (PEGRDENDNQERHCW). An L-serine-binding site is contributed by 233–235 (TAE). Residue 264-266 (RRE) coordinates ATP. Residue E287 coordinates L-serine. An ATP-binding site is contributed by 351–354 (EISS). S385 is an L-serine binding site.

This sequence belongs to the class-II aminoacyl-tRNA synthetase family. Type-1 seryl-tRNA synthetase subfamily. Homodimer. The tRNA molecule binds across the dimer.

The protein resides in the cytoplasm. The enzyme catalyses tRNA(Ser) + L-serine + ATP = L-seryl-tRNA(Ser) + AMP + diphosphate + H(+). The catalysed reaction is tRNA(Sec) + L-serine + ATP = L-seryl-tRNA(Sec) + AMP + diphosphate + H(+). The protein operates within aminoacyl-tRNA biosynthesis; selenocysteinyl-tRNA(Sec) biosynthesis; L-seryl-tRNA(Sec) from L-serine and tRNA(Sec): step 1/1. Its function is as follows. Catalyzes the attachment of serine to tRNA(Ser). Is also able to aminoacylate tRNA(Sec) with serine, to form the misacylated tRNA L-seryl-tRNA(Sec), which will be further converted into selenocysteinyl-tRNA(Sec). The protein is Serine--tRNA ligase of Prochlorococcus marinus (strain MIT 9303).